The following is a 128-amino-acid chain: uncharacterized protein (128 aa).

Positions 1 to 50 are disordered; it reads MSNEQGKGMGFFGNKGKPASEKKDEKKTKLDLDYKPDLNPSTPYDPTLPV. The span at 18-36 shows a compositional bias: basic and acidic residues; it reads PASEKKDEKKTKLDLDYKP.

This is an uncharacterized protein from Bacillus anthracis.